The sequence spans 407 residues: Tryptophan synthase beta chain (407 aa).

Residue K91 is modified to N6-(pyridoxal phosphate)lysine.

Belongs to the TrpB family. Tetramer of two alpha and two beta chains. Pyridoxal 5'-phosphate serves as cofactor.

It catalyses the reaction (1S,2R)-1-C-(indol-3-yl)glycerol 3-phosphate + L-serine = D-glyceraldehyde 3-phosphate + L-tryptophan + H2O. Its pathway is amino-acid biosynthesis; L-tryptophan biosynthesis; L-tryptophan from chorismate: step 5/5. Functionally, the beta subunit is responsible for the synthesis of L-tryptophan from indole and L-serine. The chain is Tryptophan synthase beta chain from Streptococcus pneumoniae (strain JJA).